Reading from the N-terminus, the 626-residue chain is Chaperone protein HtpG (626 aa).

Residues 1 to 339 (MSQNQETRGF…SNDLPLNVSR (339 aa)) are a; substrate-binding. Residues 340 to 555 (EILQDNKITA…NDQMTTQMAK (216 aa)) form a b region. Residues 556 to 626 (LFAAAGQPVP…FIKRINKLLG (71 aa)) form a c region.

Belongs to the heat shock protein 90 family. As to quaternary structure, homodimer.

The protein localises to the cytoplasm. Molecular chaperone. Has ATPase activity. This Haemophilus influenzae (strain PittEE) protein is Chaperone protein HtpG.